The chain runs to 54 residues: Large ribosomal subunit protein bL33 (54 aa).

It belongs to the bacterial ribosomal protein bL33 family.

The polypeptide is Large ribosomal subunit protein bL33 (Legionella pneumophila (strain Lens)).